The sequence spans 132 residues: Fluoride-specific ion channel FluC (132 aa).

Transmembrane regions (helical) follow at residues 6 to 26, 41 to 61, 73 to 93, and 104 to 124; these read VLQL…RFIV, GTLV…ILMI, FLIV…FETY, and AMLN…LGIW. 2 residues coordinate Na(+): Gly80 and Thr83.

The protein belongs to the fluoride channel Fluc/FEX (TC 1.A.43) family.

It localises to the cell inner membrane. The enzyme catalyses fluoride(in) = fluoride(out). Na(+) is not transported, but it plays an essential structural role and its presence is essential for fluoride channel function. Functionally, fluoride-specific ion channel. Important for reducing fluoride concentration in the cell, thus reducing its toxicity. The protein is Fluoride-specific ion channel FluC of Hydrogenovibrio crunogenus (strain DSM 25203 / XCL-2) (Thiomicrospira crunogena).